The sequence spans 218 residues: MTHVRPVEIFHLGPIPIYSTVVNTWIIMILLLAGIFLATRKLSFIPRGAQHVLEMFLEFFYGLLEEIIGKEGRRYLPLVATLFIFILSLNLSWFIPGMKPPTMDLSTTAAFAVTTIILVQIFGIRKLGLRGYIRHFFQPAPFLFPLNVIEELVKPVSLSLRLFGNLFGEEMVVTILFLMIPFLLPTPIMLLGVLMGTIQAFVFTLLTITYIANFVHGH.

5 consecutive transmembrane segments (helical) span residues 17 to 37 (IYST…GIFL), 75 to 95 (YLPL…SWFI), 104 to 124 (DLST…IFGI), 162 to 184 (LFGN…PFLL), and 196 to 216 (GTIQ…NFVH).

This sequence belongs to the ATPase A chain family. As to quaternary structure, F-type ATPases have 2 components, CF(1) - the catalytic core - and CF(0) - the membrane proton channel. CF(1) has five subunits: alpha(3), beta(3), gamma(1), delta(1), epsilon(1). CF(0) has three main subunits: a(1), b(2) and c(9-12). The alpha and beta chains form an alternating ring which encloses part of the gamma chain. CF(1) is attached to CF(0) by a central stalk formed by the gamma and epsilon chains, while a peripheral stalk is formed by the delta and b chains. In this bacterium the a and b subunits are transcribed but do not seem to be translated, thus the ATP synthase consists of the alpha, beta, gamma, delta, epsilon and c subunits.

It localises to the cell membrane. In terms of biological role, key component of the proton channel; it plays a direct role in the translocation of protons across the membrane. This Moorella thermoacetica (strain ATCC 39073 / JCM 9320) protein is ATP synthase subunit a.